Reading from the N-terminus, the 176-residue chain is Large ribosomal subunit protein uL6 (176 aa).

This sequence belongs to the universal ribosomal protein uL6 family. In terms of assembly, part of the 50S ribosomal subunit.

Its function is as follows. This protein binds to the 23S rRNA, and is important in its secondary structure. It is located near the subunit interface in the base of the L7/L12 stalk, and near the tRNA binding site of the peptidyltransferase center. This is Large ribosomal subunit protein uL6 from Burkholderia vietnamiensis (strain G4 / LMG 22486) (Burkholderia cepacia (strain R1808)).